The chain runs to 419 residues: Glucose-1-phosphate adenylyltransferase (419 aa).

Residues Tyr-107, Gly-172, 187 to 188 (EK), and Ser-205 contribute to the alpha-D-glucose 1-phosphate site.

The protein belongs to the bacterial/plant glucose-1-phosphate adenylyltransferase family. As to quaternary structure, homotetramer.

The enzyme catalyses alpha-D-glucose 1-phosphate + ATP + H(+) = ADP-alpha-D-glucose + diphosphate. Its pathway is glycan biosynthesis; glycogen biosynthesis. Involved in the biosynthesis of ADP-glucose, a building block required for the elongation reactions to produce glycogen. Catalyzes the reaction between ATP and alpha-D-glucose 1-phosphate (G1P) to produce pyrophosphate and ADP-Glc. This Novosphingobium aromaticivorans (strain ATCC 700278 / DSM 12444 / CCUG 56034 / CIP 105152 / NBRC 16084 / F199) protein is Glucose-1-phosphate adenylyltransferase.